Here is a 525-residue protein sequence, read N- to C-terminus: ATP synthase subunit alpha (525 aa).

171 to 178 (GDRQTGKS) contributes to the ATP binding site.

It belongs to the ATPase alpha/beta chains family. F-type ATPases have 2 components, CF(1) - the catalytic core - and CF(0) - the membrane proton channel. CF(1) has five subunits: alpha(3), beta(3), gamma(1), delta(1), epsilon(1). CF(0) has three main subunits: a(1), b(2) and c(9-12). The alpha and beta chains form an alternating ring which encloses part of the gamma chain. CF(1) is attached to CF(0) by a central stalk formed by the gamma and epsilon chains, while a peripheral stalk is formed by the delta and b chains.

It localises to the cell inner membrane. The catalysed reaction is ATP + H2O + 4 H(+)(in) = ADP + phosphate + 5 H(+)(out). In terms of biological role, produces ATP from ADP in the presence of a proton gradient across the membrane. The alpha chain is a regulatory subunit. This Flavobacterium psychrophilum (strain ATCC 49511 / DSM 21280 / CIP 103535 / JIP02/86) protein is ATP synthase subunit alpha.